Consider the following 349-residue polypeptide: Fructose-1,6-bisphosphatase class 1 (349 aa).

Positions 91, 110, 112, and 113 each coordinate Mg(2+). Substrate-binding positions include 113 to 116 (DGSS) and asparagine 205. Glutamate 277 contacts Mg(2+).

It belongs to the FBPase class 1 family. Homotetramer. Requires Mg(2+) as cofactor.

The protein localises to the cytoplasm. The catalysed reaction is beta-D-fructose 1,6-bisphosphate + H2O = beta-D-fructose 6-phosphate + phosphate. Its pathway is carbohydrate biosynthesis; gluconeogenesis. This chain is Fructose-1,6-bisphosphatase class 1, found in Rhizobium meliloti (strain 1021) (Ensifer meliloti).